The sequence spans 64 residues: Protein DsrB (64 aa).

Belongs to the DsrB family.

This is Protein DsrB from Salmonella arizonae (strain ATCC BAA-731 / CDC346-86 / RSK2980).